A 125-amino-acid polypeptide reads, in one-letter code: Small ribosomal subunit protein eS8 (125 aa).

Positions 1–23 (MQFQGRSRRKYTGAKLKSARGKR) are enriched in basic residues. The segment at 1-34 (MQFQGRSRRKYTGAKLKSARGKRKFELGREPAAT) is disordered.

The protein belongs to the eukaryotic ribosomal protein eS8 family. As to quaternary structure, part of the 30S ribosomal subunit.

The chain is Small ribosomal subunit protein eS8 from Methanococcoides burtonii (strain DSM 6242 / NBRC 107633 / OCM 468 / ACE-M).